The sequence spans 234 residues: Protein fmp52, mitochondrial (234 aa).

Residues 1 to 36 (MANVALLGCTGMVGSHILTHLLGNSSVARIDTISRR) constitute a mitochondrion transit peptide.

Belongs to the FMP52 family.

The protein localises to the mitochondrion outer membrane. The polypeptide is Protein fmp52, mitochondrial (fmp52) (Aspergillus niger (strain ATCC MYA-4892 / CBS 513.88 / FGSC A1513)).